The following is a 208-amino-acid chain: Recombination protein RecR (208 aa).

Residues 57–72 (CALCNTLTEQEVCVTC) form a C4-type zinc finger. In terms of domain architecture, Toprim spans 80-187 (SKLCVVETPA…QVTRLARGVP (108 aa)).

Belongs to the RecR family.

Functionally, may play a role in DNA repair. It seems to be involved in an RecBC-independent recombinational process of DNA repair. It may act with RecF and RecO. The polypeptide is Recombination protein RecR (Polaromonas naphthalenivorans (strain CJ2)).